The chain runs to 149 residues: MTKGQRHIKIREIIASQEIETQDELVDILKADGYNITQATVSRDIKELHLVKVPTNNGTYKYSLPADQRFNPLSKLKRSLMDAFIKMDAASHLIVLKTMPGNAQAIGALMDNLDWEEIMGTICGDDTILIICRTPDDTETVSSKILELL.

Belongs to the ArgR family.

It localises to the cytoplasm. It participates in amino-acid biosynthesis; L-arginine biosynthesis [regulation]. Regulates arginine biosynthesis genes. In Bacillus pumilus (strain SAFR-032), this protein is Arginine repressor.